We begin with the raw amino-acid sequence, 324 residues long: Acetyl-coenzyme A carboxylase carboxyl transferase subunit alpha (324 aa).

Positions 44-297 (LEERAKQLRY…KAALLRNLAE (254 aa)) constitute a CoA carboxyltransferase C-terminal domain.

It belongs to the AccA family. As to quaternary structure, acetyl-CoA carboxylase is a heterohexamer composed of biotin carboxyl carrier protein (AccB), biotin carboxylase (AccC) and two subunits each of ACCase subunit alpha (AccA) and ACCase subunit beta (AccD).

It is found in the cytoplasm. The catalysed reaction is N(6)-carboxybiotinyl-L-lysyl-[protein] + acetyl-CoA = N(6)-biotinyl-L-lysyl-[protein] + malonyl-CoA. The protein operates within lipid metabolism; malonyl-CoA biosynthesis; malonyl-CoA from acetyl-CoA: step 1/1. Its function is as follows. Component of the acetyl coenzyme A carboxylase (ACC) complex. First, biotin carboxylase catalyzes the carboxylation of biotin on its carrier protein (BCCP) and then the CO(2) group is transferred by the carboxyltransferase to acetyl-CoA to form malonyl-CoA. This is Acetyl-coenzyme A carboxylase carboxyl transferase subunit alpha from Thermosynechococcus vestitus (strain NIES-2133 / IAM M-273 / BP-1).